Reading from the N-terminus, the 43-residue chain is Potassium channel toxin gamma-KTx 4.11 (43 aa).

Cystine bridges form between Cys5/Cys23, Cys11/Cys34, Cys20/Cys39, and Cys24/Cys41.

It belongs to the ergtoxin family. Gamma-KTx 4 subfamily. As to expression, expressed by the venom gland.

The protein localises to the secreted. Reversibly blocks Kv11/ERG potassium channels. The sequence is that of Potassium channel toxin gamma-KTx 4.11 from Centruroides noxius (Mexican scorpion).